Reading from the N-terminus, the 130-residue chain is Cyclin-dependent kinase 4 inhibitor B (130 aa).

ANK repeat units follow at residues 5–34 (SSDAGLATAAARGQVETVRQLLEAGADPNA), 38–66 (FGRRPIQVMMMGSAQVAELLLLHGAEPNC), 71–100 (TLTRPVHDAAREGFLDTLVVLHRAGARLDV), and 104–130 (WGRLPVDLAEEQGHRDIARYLHAATGD). The residue at position 12 (threonine 12) is a Phosphothreonine.

This sequence belongs to the CDKN2 cyclin-dependent kinase inhibitor family. Heterodimer of CDKN2B with CDK4 or CDK6. Expressed ubiquitously.

Functionally, interacts strongly with CDK4 and CDK6. Potent inhibitor. Potential effector of TGF-beta induced cell cycle arrest. In Mus musculus (Mouse), this protein is Cyclin-dependent kinase 4 inhibitor B (Cdkn2b).